A 173-amino-acid chain; its full sequence is Membrane protein PM19L (173 aa).

The next 4 membrane-spanning stretches (helical) occupy residues 9-29 (IAPL…FASW), 43-63 (GVAG…AGVV), 83-103 (LAAG…AFGL), and 124-144 (FVII…GGLF).

In terms of tissue distribution, expressed in roots, leaf blades, leaf sheaths, stems, spikelets and embryos.

It localises to the membrane. Its function is as follows. May be involved in abiotic stress response through abscisic acid-dependent signaling. The chain is Membrane protein PM19L from Oryza sativa subsp. japonica (Rice).